We begin with the raw amino-acid sequence, 205 residues long: Putative glutamine amidotransferase-like protein L716 (205 aa).

The 176-residue stretch at 1–176 (MLLIIQNGYI…SNHIESYDYA (176 aa)) folds into the Glutamine amidotransferase type-1 domain. Catalysis depends on for GATase activity residues cysteine 82, histidine 155, and aspartate 157.

The protein is Putative glutamine amidotransferase-like protein L716 of Acanthamoeba polyphaga mimivirus (APMV).